Reading from the N-terminus, the 657-residue chain is MKQMSYVTRWLYSTSHKDIGMTYLGFGMLSAMMGTGMSVMMRMELSNGNSQFFHGNNQAFNVMMSGHALLMMFFFIMPVWMGAFGNFFLPMLMGAADMAFARLNNISFWCLPPALVCMVCSVLMEQGAGTGFTTYPPLSSMSAHSGPSVDLAMFAMHLTSMSSLLGAMNFMVTVLNMRTMGLHMVNMPLFAWAMFLTAMLLLLSLPVLTAAVTLLLMDRNFNTGFYEVGAGGDPVTYEHLFWFFGQWWPTNYVNNLEYCAMCWETYNKMYFIMLLITMYMSTNLLANMVKMLMTNRSNQQVTKNRMNKPHALRGDTSPKVRHKMFMNTMSKKSHALRRDTSLFSFPKNDKVRHMYDMNSKRYKSYLMGTSETTSTKSLKEMNMPSQRTGNPAITGTNLKENKNTMENSFNQWLAGLMDGDGCFGITQNKYTNCEMTVALEDEKTLRIIQNKFGGSMKLRSGAKAIRYRLHNQKGMINTMNAINGNMRHSKRLVQLHKVCSLLNMPVLEPMILTKNNSWLTGFFDADGTMNFSFKSSCHSAGGYTSKGKVSNHPQLTISVTNKYLQDVLPFKEMLGGNIYFDKSQNGYYKWSMQSKKDILNFVDYIKLNPSKTVKLNRMLLCNLYYDLKDLKSYMLNDNNMLQNKAWIKFENKWNKKF.

Residues 1-245 (MKQMSYVTRW…TYEHLFWFFG (245 aa)) form a COX1 exons 1 to 2 encoded region. The next 6 helical transmembrane spans lie at 19–39 (IGMT…GMSV), 69–89 (LLMM…NFFL), 103–123 (LNNI…CSVL), 152–172 (AMFA…NFMV), 188–208 (PLFA…LPVL), and 269–289 (MYFI…ANMV). The interval 246-657 (QWWPTNYVNN…KFENKWNKKF (412 aa)) is COX1 intron 2 encoded.

The protein in the C-terminal section; belongs to the LAGLIDADG endonuclease family. It in the N-terminal section; belongs to the heme-copper respiratory oxidase family. Post-translationally, the mature protein may arise from proteolytic cleavage of an in-frame translation of COX1 exons 1 and 2 plus intron 2, containing the aI2 open reading frame.

Its subcellular location is the mitochondrion. It is found in the membrane. Functionally, mitochondrial DNA endonuclease involved in intron homing. The sequence is that of Probable intron-encoded endonuclease aI2 (aI2) from Debaryomyces hansenii (strain ATCC 36239 / CBS 767 / BCRC 21394 / JCM 1990 / NBRC 0083 / IGC 2968) (Yeast).